Reading from the N-terminus, the 450-residue chain is Cyclin-A2-3 (450 aa).

2 disordered regions span residues 18 to 53 (ALRA…NKRK) and 75 to 94 (NSKQ…SQLA). A compositionally biased stretch (polar residues) spans 23–34 (EVTSTTQNQQRV).

It belongs to the cyclin family. Cyclin AB subfamily. In terms of assembly, interacts with CDKA-1. Interacts with SAMBA.

It is found in the nucleus. In terms of biological role, negatively regulates endocycles and acts as a regulator of ploidy levels in endoreduplication. Promotes divisions in the guard cells (GCs) after the guard mother cells (GMC) symmetric division. The chain is Cyclin-A2-3 (CYCA2-3) from Arabidopsis thaliana (Mouse-ear cress).